The chain runs to 275 residues: Large ribosomal subunit protein uL2c (275 aa).

The disordered stretch occupies residues 225–256 (AMNAVDHPHGGGEGRSPIGRSQPSTPWGRPAL).

It belongs to the universal ribosomal protein uL2 family. Part of the 50S ribosomal subunit.

Its subcellular location is the plastid. The protein localises to the chloroplast. The protein is Large ribosomal subunit protein uL2c (rpl2) of Cyanidium caldarium (Red alga).